We begin with the raw amino-acid sequence, 87 residues long: Cell division topological specificity factor (87 aa).

The protein belongs to the MinE family.

In terms of biological role, prevents the cell division inhibition by proteins MinC and MinD at internal division sites while permitting inhibition at polar sites. This ensures cell division at the proper site by restricting the formation of a division septum at the midpoint of the long axis of the cell. The protein is Cell division topological specificity factor of Delftia acidovorans (strain DSM 14801 / SPH-1).